Reading from the N-terminus, the 485-residue chain is Glutamyl-tRNA(Gln) amidotransferase subunit A (485 aa).

Catalysis depends on charge relay system residues Lys-78 and Ser-153. The active-site Acyl-ester intermediate is the Ser-177.

Belongs to the amidase family. GatA subfamily. As to quaternary structure, heterotrimer of A, B and C subunits.

The enzyme catalyses L-glutamyl-tRNA(Gln) + L-glutamine + ATP + H2O = L-glutaminyl-tRNA(Gln) + L-glutamate + ADP + phosphate + H(+). Its function is as follows. Allows the formation of correctly charged Gln-tRNA(Gln) through the transamidation of misacylated Glu-tRNA(Gln) in organisms which lack glutaminyl-tRNA synthetase. The reaction takes place in the presence of glutamine and ATP through an activated gamma-phospho-Glu-tRNA(Gln). This Bacillus cereus (strain Q1) protein is Glutamyl-tRNA(Gln) amidotransferase subunit A.